The primary structure comprises 233 residues: Movement and silencing protein TGBp1 (233 aa).

The (+)RNA virus helicase ATP-binding domain maps to 1-133 (MNHFINLLVA…CKLLSSLGIK (133 aa)). Residues 134-233 (VESHRRDRDV…EFPHTTSRPQ (100 aa)) enclose the (+)RNA virus helicase C-terminal domain.

The protein belongs to the Tymovirales TGBp1 protein family. In terms of assembly, homodimer and homooligomer. Interacts with capsid protein. Interacts with host AGO1; this interaction targets the host protein for degradation, thereby suppressing the antiviral RNA silencing.

The protein resides in the host cytoplasm. Transports viral genome to neighboring plant cells directly through plasmosdesmata, without any budding. The movement protein allows efficient cell to cell propagation, by bypassing the host cell wall barrier. Increases plasmodesma size exclusion limit. Acts as a suppressor of RNA-mediated gene silencing, also known as post-transcriptional gene silencing (PTGS), a mechanism of plant viral defense that limits the accumulation of viral RNAs. In Carica papaya (Papaya), this protein is Movement and silencing protein TGBp1.